The sequence spans 923 residues: Tyrosine-protein kinase receptor torso (923 aa).

Residues M1–Q20 form the signal peptide. At G21 to K399 the chain is on the extracellular side. Residues N37, N63, N107, N142, N146, N287, N298, N314, N326, N342, N348, and N377 are each glycosylated (N-linked (GlcNAc...) asparagine). Residues L400–C420 form a helical membrane-spanning segment. Residues R421–N923 lie on the Cytoplasmic side of the membrane. The Protein kinase domain maps to V475–G874. ATP contacts are provided by residues L481–V489 and K502. The residue at position 608 (S608) is a Phosphoserine. Residues Y656–D687 are disordered. Residues P676 to D687 show a composition bias toward basic and acidic residues. D741 serves as the catalytic Proton acceptor.

It belongs to the protein kinase superfamily. Tyr protein kinase family. Mg(2+) is required as a cofactor. May be auto-phosphorylated on tyrosine residues.

It is found in the membrane. The enzyme catalyses L-tyrosyl-[protein] + ATP = O-phospho-L-tyrosyl-[protein] + ADP + H(+). Its function is as follows. Probable receptor tyrosine kinase which is required for determination of anterior and posterior terminal structures in the embryo. During postembryonic development, involved in the initiation of metamorphosis probably by inducing the production of ecdysone in response to prothoracicotropic hormone Ptth. Binding to Ptth stimulates activation of canonical MAPK signaling leading to ERK phosphorylation. This chain is Tyrosine-protein kinase receptor torso (tor), found in Drosophila melanogaster (Fruit fly).